The sequence spans 303 residues: Kanosamine kinase (303 aa).

It belongs to the ROK (NagC/XylR) family.

It catalyses the reaction kanosamine + ATP = D-kanosamine 6-phosphate + ADP + H(+). The protein operates within antibiotic biosynthesis; rifamycin B biosynthesis. With respect to regulation, inhibited by Zn(2+), Cu(2+), and Fe(2+). Its function is as follows. Involved in the biosynthesis of 3-amino-5-hydroxybenzoate (AHBA), a compound that then serves as the starter unit for the assembly of a polyketide during the biosynthesis of rifamycin B and other ansamycin antibiotics. Catalyzes only the phosphorylation of kanosamine to yield kanosamine 6-phosphate. In Amycolatopsis mediterranei (strain S699) (Nocardia mediterranei), this protein is Kanosamine kinase (rifN).